The chain runs to 232 residues: Flagellar L-ring protein (232 aa).

Positions 1–21 (MQKYALHAYPVMALMVATLTG) are cleaved as a signal peptide. Cys-22 is lipidated: N-palmitoyl cysteine. Cys-22 carries the S-diacylglycerol cysteine lipid modification.

Belongs to the FlgH family. As to quaternary structure, the basal body constitutes a major portion of the flagellar organelle and consists of four rings (L,P,S, and M) mounted on a central rod.

Its subcellular location is the cell outer membrane. It localises to the bacterial flagellum basal body. Its function is as follows. Assembles around the rod to form the L-ring and probably protects the motor/basal body from shearing forces during rotation. The protein is Flagellar L-ring protein of Salmonella gallinarum (strain 287/91 / NCTC 13346).